The following is a 654-amino-acid chain: Myrosinase-binding protein 2 (654 aa).

4 consecutive Jacalin-type lectin domains span residues 2–151 (SEKV…HFFA), 156–291 (LKHF…HFAP), 346–489 (PNKV…YFAP), and 502–645 (AKKL…HAVP). The segment covering 314–346 (VPAPSPAPAPSPAPAPAPAPAPAPTPAPAPAPP) has biased composition (pro residues). The segment at 314 to 355 (VPAPSPAPAPSPAPAPAPAPAPAPTPAPAPAPPNKVEALGGN) is disordered.

The protein belongs to the jacalin lectin family. In terms of tissue distribution, expressed in flowers. Detected mainly in ovules and styles of immature flowers, but also in pistils, styles, stamens, petals and embryos. Not detected in leaves.

In Arabidopsis thaliana (Mouse-ear cress), this protein is Myrosinase-binding protein 2 (MBP2).